The sequence spans 406 residues: Renin (406 aa).

A signal peptide spans 1–23 (MDGWRRMPRWGLLLLLWGSCTFG). Positions 24–66 (LPTDTTTFKRIFLKRMPSIRESLKERGVDMARLGPEWSQPMKR) are cleaved as a propeptide — activation peptide. The N-linked (GlcNAc...) asparagine glycan is linked to N71. Positions 86–403 (YYGEIGIGTP…DRRNNRIGFA (318 aa)) constitute a Peptidase A1 domain. Residue D104 is part of the active site. C117 and C124 are oxidised to a cystine. N-linked (GlcNAc...) asparagine glycosylation is present at N141. C283 and C287 are oxidised to a cystine. The active site involves D292. Cysteines 325 and 362 form a disulfide.

Belongs to the peptidase A1 family. As to quaternary structure, interacts with ATP6AP2.

It localises to the secreted. Its subcellular location is the membrane. The catalysed reaction is Cleavage of Leu-|-Xaa bond in angiotensinogen to generate angiotensin I.. Interaction with ATP6AP2 results in a 5-fold increased efficiency in angiotensinogen processing. Renin is a highly specific endopeptidase, whose only known function is to generate angiotensin I from angiotensinogen in the plasma, initiating a cascade of reactions that produce an elevation of blood pressure and increased sodium retention by the kidney. This is Renin (REN) from Macaca fascicularis (Crab-eating macaque).